We begin with the raw amino-acid sequence, 294 residues long: 4-hydroxy-tetrahydrodipicolinate synthase (294 aa).

Residue threonine 47 coordinates pyruvate. The Proton donor/acceptor role is filled by tyrosine 136. Lysine 164 acts as the Schiff-base intermediate with substrate in catalysis. Residue valine 206 coordinates pyruvate.

Belongs to the DapA family. In terms of assembly, homotetramer; dimer of dimers.

It localises to the cytoplasm. The catalysed reaction is L-aspartate 4-semialdehyde + pyruvate = (2S,4S)-4-hydroxy-2,3,4,5-tetrahydrodipicolinate + H2O + H(+). The protein operates within amino-acid biosynthesis; L-lysine biosynthesis via DAP pathway; (S)-tetrahydrodipicolinate from L-aspartate: step 3/4. In terms of biological role, catalyzes the condensation of (S)-aspartate-beta-semialdehyde [(S)-ASA] and pyruvate to 4-hydroxy-tetrahydrodipicolinate (HTPA). In Nostoc punctiforme (strain ATCC 29133 / PCC 73102), this protein is 4-hydroxy-tetrahydrodipicolinate synthase.